The primary structure comprises 249 residues: Transmembrane protein 51 (249 aa).

2 consecutive transmembrane segments (helical) span residues 17-37 (IGLG…VPGF) and 64-84 (VAYV…CLSI). Disordered stretches follow at residues 95-126 (ELAR…SRYY), 161-199 (TGLD…PLKV), and 213-249 (RITL…RPPD). Polar residues predominate over residues 99–108 (IQQQAGTVPH). Residues serine 109, serine 114, serine 178, and serine 188 each carry the phosphoserine modification. Residues 167-178 (TPTSTRAETETS) show a composition bias toward polar residues. Over residues 190–199 (LAKRLKPLKV) the composition is skewed to basic residues. The segment covering 220 to 234 (NVPPPSIEPLTPPPL) has biased composition (pro residues).

It is found in the membrane. In Mus musculus (Mouse), this protein is Transmembrane protein 51 (Tmem51).